The primary structure comprises 121 residues: Protein FAM241B (121 aa).

The segment at 12 to 58 is disordered; it reads QDDDPRVRTTTQPPRGSIPRQSFFNRGHGAPPGGPGPRQQQAGARLG. The span at 19–35 shows a compositional bias: polar residues; that stretch reads RTTTQPPRGSIPRQSFF. The residue at position 33 (Ser-33) is a Phosphoserine. Over residues 48 to 58 the composition is skewed to low complexity; the sequence is PRQQQAGARLG. Position 62 is a phosphoserine (Ser-62). Residues 92–112 traverse the membrane as a helical segment; sequence ILLLFLLMMLGVRGLLLVGLV.

This sequence belongs to the FAM241 family.

The protein localises to the membrane. Functionally, may play a role in lysosome homeostasis. This chain is Protein FAM241B, found in Homo sapiens (Human).